Here is a 346-residue protein sequence, read N- to C-terminus: Small ribosomal subunit biogenesis GTPase RsgA (346 aa).

Residues 1–26 (MAKRKLTQNQTRRIQSNNAKTLHRHK) are disordered. Residues 7 to 20 (TQNQTRRIQSNNAK) are compositionally biased toward polar residues. Residues 103-271 (ENEISRPDYY…LIDSPGIREF (169 aa)) form the CP-type G domain. Residues 159–162 (NKVD) and 213–221 (GQSGVGKSS) contribute to the GTP site. Residues Cys-295, Cys-300, His-302, and Cys-308 each coordinate Zn(2+).

It belongs to the TRAFAC class YlqF/YawG GTPase family. RsgA subfamily. In terms of assembly, monomer. Associates with 30S ribosomal subunit, binds 16S rRNA. Zn(2+) is required as a cofactor.

The protein localises to the cytoplasm. Its function is as follows. One of several proteins that assist in the late maturation steps of the functional core of the 30S ribosomal subunit. Helps release RbfA from mature subunits. May play a role in the assembly of ribosomal proteins into the subunit. Circularly permuted GTPase that catalyzes slow GTP hydrolysis, GTPase activity is stimulated by the 30S ribosomal subunit. This is Small ribosomal subunit biogenesis GTPase RsgA from Haemophilus influenzae (strain PittGG).